Consider the following 199-residue polypeptide: Chromophore lyase CpcT/CpeT (199 aa).

It belongs to the CpcT/CpeT biliprotein lyase family.

Covalently attaches a chromophore to Cys residue(s) of phycobiliproteins. The chain is Chromophore lyase CpcT/CpeT from Prochlorococcus marinus (strain NATL1A).